The following is a 253-amino-acid chain: Probable proteasome subunit alpha type-7 (253 aa).

At Ser104 the chain carries Phosphoserine.

This sequence belongs to the peptidase T1A family. In terms of assembly, the 26S proteasome consists of a 20S proteasome core and two 19S regulatory subunits. The 20S proteasome core is composed of 28 subunits that are arranged in four stacked rings, resulting in a barrel-shaped structure. The two end rings are each formed by seven alpha subunits, and the two central rings are each formed by seven beta subunits. The catalytic chamber with the active sites is on the inside of the barrel.

It localises to the cytoplasm. The protein localises to the nucleus. In terms of biological role, the proteasome is a multicatalytic proteinase complex which is characterized by its ability to cleave peptides with Arg, Phe, Tyr, Leu, and Glu adjacent to the leaving group at neutral or slightly basic pH. The proteasome has an ATP-dependent proteolytic activity. The protein is Probable proteasome subunit alpha type-7 (pre10) of Schizosaccharomyces pombe (strain 972 / ATCC 24843) (Fission yeast).